A 115-amino-acid chain; its full sequence is U3-lycotoxin-Ls1a (115 aa).

A signal peptide spans M1–A20. Residues E21 to R44 constitute a propeptide that is removed on maturation. Cystine bridges form between C48-C63, C55-C72, C62-C87, and C74-C85.

The protein belongs to the neurotoxin 19 (CSTX) family. 01 subfamily. Expressed by the venom gland.

It localises to the secreted. This chain is U3-lycotoxin-Ls1a, found in Lycosa singoriensis (Wolf spider).